A 177-amino-acid polypeptide reads, in one-letter code: ATP synthase subunit delta (177 aa).

Belongs to the ATPase delta chain family. In terms of assembly, F-type ATPases have 2 components, F(1) - the catalytic core - and F(0) - the membrane proton channel. F(1) has five subunits: alpha(3), beta(3), gamma(1), delta(1), epsilon(1). F(0) has three main subunits: a(1), b(2) and c(10-14). The alpha and beta chains form an alternating ring which encloses part of the gamma chain. F(1) is attached to F(0) by a central stalk formed by the gamma and epsilon chains, while a peripheral stalk is formed by the delta and b chains.

Its subcellular location is the cell inner membrane. In terms of biological role, f(1)F(0) ATP synthase produces ATP from ADP in the presence of a proton or sodium gradient. F-type ATPases consist of two structural domains, F(1) containing the extramembraneous catalytic core and F(0) containing the membrane proton channel, linked together by a central stalk and a peripheral stalk. During catalysis, ATP synthesis in the catalytic domain of F(1) is coupled via a rotary mechanism of the central stalk subunits to proton translocation. Its function is as follows. This protein is part of the stalk that links CF(0) to CF(1). It either transmits conformational changes from CF(0) to CF(1) or is implicated in proton conduction. The protein is ATP synthase subunit delta of Shewanella sp. (strain ANA-3).